The primary structure comprises 515 residues: Monocarboxylate transporter 10 (515 aa).

The disordered stretch occupies residues 1-48; that stretch reads MVLSQEEPDSARGTSEAQPLGPAPTGAAPPPGPGPSDSPEAAVEKVEV. The Cytoplasmic segment spans residues 1–66; it reads MVLSQEEPDS…EPHEPPEPPE (66 aa). Low complexity predominate over residues 17-26; that stretch reads AQPLGPAPTG. The segment covering 27–36 has biased composition (pro residues); the sequence is AAPPPGPGPS. Residues 67 to 87 traverse the membrane as a helical segment; it reads GGWGWLVMLAAMWCNGSVFGI. At 88 to 114 the chain is on the extracellular side; the sequence is QNACGVLFVSMLETFGSKDDDKMVFKT. The helical transmembrane segment at 115-135 threads the bilayer; it reads AWVGSLSMGMIFFCCPIVSVF. The Cytoplasmic segment spans residues 136–144; that stretch reads TDLFGCRKT. The helical transmembrane segment at 145–165 threads the bilayer; that stretch reads AVVGAAVGFVGLMSSSFVSSI. Over 166–171 the chain is Extracellular; that stretch reads EPLYLT. The chain crosses the membrane as a helical span at residues 172 to 192; sequence YGIIFACGCSFAYQPSLVILG. At 193-200 the chain is on the cytoplasmic side; that stretch reads HYFKKRLG. The helical transmembrane segment at 201-221 threads the bilayer; the sequence is LVNGIVTAGSSVFTILLPLLL. Topologically, residues 222–228 are extracellular; it reads RVLIDSV. A helical transmembrane segment spans residues 229-249; that stretch reads GLFYTLRVLCIFMFVLFLAGF. The Cytoplasmic portion of the chain corresponds to 250–291; that stretch reads TYRPLATSTKDKESGGSGSSLFSRKKFSPPKKIFNFAIFKVT. Residue serine 263 is modified to Phosphoserine. The helical transmembrane segment at 292–312 threads the bilayer; sequence AYAVWAVGIPLALFGYFVPYV. Residues 313 to 329 lie on the Extracellular side of the membrane; the sequence is HLMKHVNERFQDEKNKE. Residues 330–350 form a helical membrane-spanning segment; that stretch reads VVLMCIGVTSGVGRLLFGRIA. Position 351 (aspartate 351) is a topological domain, cytoplasmic. The chain crosses the membrane as a helical span at residues 352–372; sequence YVPGVKKVYLQVLSFFFIGLM. The Extracellular segment spans residues 373 to 396; sequence SMMIPLCSIFGALIAVCLIMGLFD. Residues 397 to 417 form a helical membrane-spanning segment; that stretch reads GCFISIMAPIAFELVGAQDVS. Residues 418–419 lie on the Cytoplasmic side of the membrane; that stretch reads QA. A helical membrane pass occupies residues 420–440; it reads IGFLLGFMSIPMTVGPPIAGL. Topologically, residues 441 to 451 are extracellular; sequence LRDKLGSYDVA. Residues 452–472 traverse the membrane as a helical segment; it reads FYLAGVPPLIGGAVLCFIPWI. The Cytoplasmic portion of the chain corresponds to 473–515; that stretch reads HSKKQREISKTTGKEKMEKMLENQNSLLSSSSGMFKKESDSII. A phosphoserine mark is found at serine 498, serine 501, serine 503, and serine 504.

This sequence belongs to the major facilitator superfamily. Monocarboxylate porter (TC 2.A.1.13) family. Not N-glycosylated. Strongly expressed in kidney and skeletal muscle and at lower level in placenta and heart.

Its subcellular location is the cell membrane. It localises to the basolateral cell membrane. It catalyses the reaction 3,3',5-triiodo-L-thyronine(out) = 3,3',5-triiodo-L-thyronine(in). The enzyme catalyses L-thyroxine(out) = L-thyroxine(in). It carries out the reaction L-tryptophan(in) = L-tryptophan(out). The catalysed reaction is L-tyrosine(in) = L-tyrosine(out). It catalyses the reaction L-phenylalanine(in) = L-phenylalanine(out). Functionally, sodium- and proton-independent thyroid hormones and aromatic acids transporter. Mediates both uptake and efflux of 3,5,3'-triiodothyronine (T3) and 3,5,3',5'-tetraiodothyronine (T4) with high affinity, suggesting a role in the homeostasis of thyroid hormone levels. Responsible for low affinity bidirectional transport of the aromatic amino acids, such as phenylalanine, tyrosine, tryptophan and L-3,4-dihydroxyphenylalanine (L-dopa). Plays an important role in homeostasis of aromatic amino acids. The polypeptide is Monocarboxylate transporter 10 (SLC16A10) (Homo sapiens (Human)).